Here is a 417-residue protein sequence, read N- to C-terminus: Probable serine/threonine-protein kinase WNK9 (417 aa).

A disordered region spans residues 1-23 (MDLVEAEAEEQPPDEDGDEEGYV). A Protein kinase domain is found at 32 to 289 (IRYDEIVGSG…ATELLKSSFL (258 aa)). Residues 113 to 116 (TELF) and lysine 163 contribute to the ATP site. The active-site Proton acceptor is the aspartate 180.

The protein belongs to the protein kinase superfamily. Ser/Thr protein kinase family. WNK subfamily.

The catalysed reaction is L-seryl-[protein] + ATP = O-phospho-L-seryl-[protein] + ADP + H(+). The enzyme catalyses L-threonyl-[protein] + ATP = O-phospho-L-threonyl-[protein] + ADP + H(+). The protein is Probable serine/threonine-protein kinase WNK9 (WNK9) of Oryza sativa subsp. japonica (Rice).